Consider the following 584-residue polypeptide: Putative poly(A) polymerase catalytic subunit (584 aa).

Over residues 522 to 531 (EAEISEKEET) the composition is skewed to basic and acidic residues. The disordered stretch occupies residues 522-584 (EAEISEKEET…ENSLDSLTSD (63 aa)). Low complexity predominate over residues 546–569 (SPNSSPNSSPNNSLNNSIDISTNN).

It belongs to the poxviridae poly(A) polymerase catalytic subunit family. Highly divergent.

Its subcellular location is the virion. The enzyme catalyses RNA(n) + ATP = RNA(n)-3'-adenine ribonucleotide + diphosphate. Functionally, polymerase that creates the 3'-poly(A) tail of mRNA's. This Acanthamoeba polyphaga (Amoeba) protein is Putative poly(A) polymerase catalytic subunit.